Consider the following 303-residue polypeptide: Protein REVEILLE 5 (303 aa).

An HTH myb-type domain is found at 54 to 108 (TIKKSRENWTDQEHDKFLEALHLFDRDWKKIEAFVGSKTVVQIRSHAQKYFLKVQ). The H-T-H motif DNA-binding region spans 81–104 (WKKIEAFVGSKTVVQIRSHAQKYF). The interval 109-130 (KSGANEHLPPPRPKRKASHPYP) is disordered.

Its subcellular location is the nucleus. Probable transcription factor. The polypeptide is Protein REVEILLE 5 (RVE5) (Arabidopsis thaliana (Mouse-ear cress)).